A 367-amino-acid chain; its full sequence is tRNA/tmRNA (uracil-C(5))-methyltransferase (367 aa).

S-adenosyl-L-methionine contacts are provided by Q190, Y218, N223, E239, and D299. C324 (nucleophile) is an active-site residue. E358 serves as the catalytic Proton acceptor.

It belongs to the class I-like SAM-binding methyltransferase superfamily. RNA M5U methyltransferase family. TrmA subfamily.

It carries out the reaction uridine(54) in tRNA + S-adenosyl-L-methionine = 5-methyluridine(54) in tRNA + S-adenosyl-L-homocysteine + H(+). The catalysed reaction is uridine(341) in tmRNA + S-adenosyl-L-methionine = 5-methyluridine(341) in tmRNA + S-adenosyl-L-homocysteine + H(+). In terms of biological role, dual-specificity methyltransferase that catalyzes the formation of 5-methyluridine at position 54 (m5U54) in all tRNAs, and that of position 341 (m5U341) in tmRNA (transfer-mRNA). This chain is tRNA/tmRNA (uracil-C(5))-methyltransferase, found in Yersinia pestis bv. Antiqua (strain Antiqua).